We begin with the raw amino-acid sequence, 464 residues long: UDP-glycosyltransferase 76C1 (464 aa).

UDP-alpha-D-glucose-binding positions include Ser279, Ala338 to Gln340, His355 to Glu363, and Lys377 to Gln380.

The protein belongs to the UDP-glycosyltransferase family.

Its activity is regulated as follows. Inhibited by olomoucine and 3-isobutyl-1-methylxanthine. In terms of biological role, involved in the N-glucosylation of cytokinins. Catalyzes the formation of both the 7-N and the 9-N-glucosides. This Arabidopsis thaliana (Mouse-ear cress) protein is UDP-glycosyltransferase 76C1 (UGT76C1).